The primary structure comprises 462 residues: L-seryl-tRNA(Sec) selenium transferase (462 aa).

An N6-(pyridoxal phosphate)lysine modification is found at Lys-293.

The protein belongs to the SelA family. Requires pyridoxal 5'-phosphate as cofactor.

The protein localises to the cytoplasm. The enzyme catalyses L-seryl-tRNA(Sec) + selenophosphate + H(+) = L-selenocysteinyl-tRNA(Sec) + phosphate. It functions in the pathway aminoacyl-tRNA biosynthesis; selenocysteinyl-tRNA(Sec) biosynthesis; selenocysteinyl-tRNA(Sec) from L-seryl-tRNA(Sec) (bacterial route): step 1/1. In terms of biological role, converts seryl-tRNA(Sec) to selenocysteinyl-tRNA(Sec) required for selenoprotein biosynthesis. This is L-seryl-tRNA(Sec) selenium transferase from Clostridium botulinum (strain Langeland / NCTC 10281 / Type F).